Consider the following 382-residue polypeptide: uncharacterized protein (382 aa).

12 helical membrane-spanning segments follow: residues V8–L28, M45–I65, Y75–W95, F102–S122, L131–S151, L157–F177, L204–P224, G231–G251, V270–P290, A291–C311, A325–M345, and S349–L369.

It belongs to the major facilitator superfamily. YcaD (TC 2.A.1.26) family.

The protein resides in the cell inner membrane. This is an uncharacterized protein from Salmonella agona (strain SL483).